The chain runs to 623 residues: Chaperone protein HtpG (623 aa).

Positions 1–326 (MAEEKRQFQA…SQDLPLNVSR (326 aa)) are a; substrate-binding. Residues 327–543 (EMLQHNPVLS…EGEMSMHLEK (217 aa)) are b. Residues 544–623 (MLRAHNQAPG…VSVMEKGLLG (80 aa)) are c.

Belongs to the heat shock protein 90 family. Homodimer.

The protein localises to the cytoplasm. Molecular chaperone. Has ATPase activity. The polypeptide is Chaperone protein HtpG (Paramagnetospirillum magneticum (strain ATCC 700264 / AMB-1) (Magnetospirillum magneticum)).